The sequence spans 410 residues: MLVLVVNCGSSSIKYQVREVTPEGSEPSPYTSSMPAINENIPLATATAGMAGDQVITKGLIENIGTSEIQDHTQALEILARRLDEELGGRTIDAAGHRVVHGGERFSAPVLVNNEIIRAIERLAPLAPLHNPAHALGLRAIQKTYPGMPQVCVFDTAFHRTMPEKAWRYAIPEQWYEMDGMRRYGFHGTSHDYVTGKACEFLGIPREQFNTVVAHLGNGASVTAIREGRSYDTSMGYTPLAGLVMGTRSGDLDPSVVTAMLERKPGMSAQDMNRILNNESGLQGICGDSDMRAVEQRADSGDERAQLALDMAAYRLAKYIGGYHVAVGGAQALIFTAGIGENSPGFRALVCDQLGALGVRLDASRNEHPEGNVARISFPDSAVEVLVVATDEERAIAEATAALVWERVKN.

Residue Asn-7 coordinates Mg(2+). An ATP-binding site is contributed by Lys-14. A substrate-binding site is contributed by Arg-98. The Proton donor/acceptor role is filled by Asp-155. ATP contacts are provided by residues 215-219, 290-292, and 338-342; these read HLGNG, DMR, and GIGEN. Glu-392 is a Mg(2+) binding site.

It belongs to the acetokinase family. Homodimer. Mg(2+) is required as a cofactor. It depends on Mn(2+) as a cofactor.

It is found in the cytoplasm. It catalyses the reaction acetate + ATP = acetyl phosphate + ADP. The protein operates within metabolic intermediate biosynthesis; acetyl-CoA biosynthesis; acetyl-CoA from acetate: step 1/2. In terms of biological role, catalyzes the formation of acetyl phosphate from acetate and ATP. Can also catalyze the reverse reaction. The sequence is that of Acetate kinase from Kocuria rhizophila (strain ATCC 9341 / DSM 348 / NBRC 103217 / DC2201).